The sequence spans 204 residues: MGSTEDELRAMARDLQLPRFLGTFDKSFPGFLQESQRCCAIVNTAARHTGGRHWLAVAWEPASRTFYFFDPFGFSDRELAQVYDFEYQRLLRKSAIQSTPDRCLTLVKSTQSVQGPHSAACGLFCLLFLAAFARYPDSPMAYNPVMDLVEGVDNERLFDADVQPIFRANQEACYAFLARHSAYFRAHRHAIMEQTHLHKALDMQ.

Catalysis depends on residues histidine 53, aspartate 70, and cysteine 121.

It belongs to the peptidase C5 family. Interacts with protease cofactor pVI-C; this interaction is necessary for protease activation.

The protein localises to the virion. Its subcellular location is the host nucleus. The enzyme catalyses Cleaves proteins of the adenovirus and its host cell at two consensus sites: -Yaa-Xaa-Gly-Gly-|-Xaa- and -Yaa-Xaa-Gly-Xaa-|-Gly- (in which Yaa is Met, Ile or Leu, and Xaa is any amino acid).. Its activity is regulated as follows. Requires DNA and protease cofactor for maximal activation. Inside nascent virions, becomes partially activated by binding to the viral DNA, allowing it to cleave the cofactor that binds to the protease and fully activates it. Actin, like the viral protease cofactor, seems to act as a cofactor in the cleavage of cytokeratin 18 and of actin itself. Cleaves viral precursor proteins (pTP, pIIIa, pVI, pVII, pVIII, and pX) inside newly assembled particles giving rise to mature virions. Protease complexed to its cofactor slides along the viral DNA to specifically locate and cleave the viral precursors. Mature virions have a weakened organization compared to the unmature virions, thereby facilitating subsequent uncoating. Without maturation, the particle lacks infectivity and is unable to uncoat. Late in adenovirus infection, in the cytoplasm, may participate in the cytoskeleton destruction. Cleaves host cell cytoskeletal keratins K7 and K18. The sequence is that of Protease from Porcine adenovirus A serotype 3 (PAdV-3).